The primary structure comprises 176 residues: Ribosome rescue factor SmrB (176 aa).

In terms of domain architecture, Smr spans 93–168 (LDLHGYRQSE…GDAALLVLID (76 aa)).

This sequence belongs to the SmrB family. In terms of assembly, associates with collided ribosomes, but not with correctly translating polysomes.

In terms of biological role, acts as a ribosome collision sensor. Detects stalled/collided disomes (pairs of ribosomes where the leading ribosome is stalled and a second ribosome has collided with it) and endonucleolytically cleaves mRNA at the 5' boundary of the stalled ribosome. Stalled/collided disomes form a new interface (primarily via the 30S subunits) that binds SmrB. Cleaved mRNA becomes available for tmRNA ligation, leading to ribosomal subunit dissociation and rescue of stalled ribosomes. The protein is Ribosome rescue factor SmrB of Shewanella sp. (strain W3-18-1).